Consider the following 170-residue polypeptide: MQIAIIAAGCFWGVQEVYLRKFIPAAAILKTSVGYTGGITADPTYKEVCTNTTNHAEALKIEFDEKLTSYDKIIEFFFAMHDPTTSNQQGNDIGTQYRSAIFTTNPEQATIAKRVMNEVQAKHYPNKKIVTQILPAGKWWDAEDYHQLYLEKNPDGYRCSSHFLRWNVFE.

The protein belongs to the MsrA Met sulfoxide reductase family.

The protein localises to the cytoplasm. It localises to the nucleus. The catalysed reaction is L-methionyl-[protein] + [thioredoxin]-disulfide + H2O = L-methionyl-(S)-S-oxide-[protein] + [thioredoxin]-dithiol. It carries out the reaction [thioredoxin]-disulfide + L-methionine + H2O = L-methionine (S)-S-oxide + [thioredoxin]-dithiol. Has an important function as a repair enzyme for proteins that have been inactivated by oxidation. Catalyzes the reversible oxidation-reduction of methionine sulfoxide in proteins to methionine. In Schizosaccharomyces pombe (strain 972 / ATCC 24843) (Fission yeast), this protein is Probable peptide methionine sulfoxide reductase (mxr1).